A 71-amino-acid polypeptide reads, in one-letter code: Translation initiation factor IF-1 (71 aa).

The S1-like domain maps to 1 to 71 (MAKQSAIEQD…LSKARITYRY (71 aa)).

This sequence belongs to the IF-1 family. In terms of assembly, component of the 30S ribosomal translation pre-initiation complex which assembles on the 30S ribosome in the order IF-2 and IF-3, IF-1 and N-formylmethionyl-tRNA(fMet); mRNA recruitment can occur at any time during PIC assembly.

The protein localises to the cytoplasm. In terms of biological role, one of the essential components for the initiation of protein synthesis. Stabilizes the binding of IF-2 and IF-3 on the 30S subunit to which N-formylmethionyl-tRNA(fMet) subsequently binds. Helps modulate mRNA selection, yielding the 30S pre-initiation complex (PIC). Upon addition of the 50S ribosomal subunit IF-1, IF-2 and IF-3 are released leaving the mature 70S translation initiation complex. This Flavobacterium psychrophilum (strain ATCC 49511 / DSM 21280 / CIP 103535 / JIP02/86) protein is Translation initiation factor IF-1.